Reading from the N-terminus, the 401-residue chain is Exodeoxyribonuclease 7 large subunit (401 aa).

It belongs to the XseA family. In terms of assembly, heterooligomer composed of large and small subunits.

It is found in the cytoplasm. It catalyses the reaction Exonucleolytic cleavage in either 5'- to 3'- or 3'- to 5'-direction to yield nucleoside 5'-phosphates.. Its function is as follows. Bidirectionally degrades single-stranded DNA into large acid-insoluble oligonucleotides, which are then degraded further into small acid-soluble oligonucleotides. This Clostridioides difficile (strain 630) (Peptoclostridium difficile) protein is Exodeoxyribonuclease 7 large subunit.